Here is a 174-residue protein sequence, read N- to C-terminus: Protein VdlD (174 aa).

A HotDog ACOT-type domain is found at 20–132 (DRTKLLMSYL…YFTMVAVENG (113 aa)).

This sequence belongs to the acyl coenzyme A hydrolase family.

This Helicobacter pylori (strain J99 / ATCC 700824) (Campylobacter pylori J99) protein is Protein VdlD (vdlD).